Reading from the N-terminus, the 125-residue chain is MORF4 family-associated protein 1 (125 aa).

Residues 76–99 form a disordered region; sequence ESALNHLQGAGGAEPRGPRAEKAD. Residues 94–124 adopt a coiled-coil conformation; the sequence is RAEKADEKAQEMAKMAEMLVQLVRRIEKSES.

This sequence belongs to the MORF4 family-associated protein family. Found in a complex composed of MORF4L1, MRFAP1 and RB1. Interacts via its N-terminus with MORF4L1. Interacts with CSTB and MORF4L2.

It is found in the nucleus. The protein localises to the cytoplasm. The protein resides in the perinuclear region. This Rattus norvegicus (Rat) protein is MORF4 family-associated protein 1.